We begin with the raw amino-acid sequence, 173 residues long: Acireductone dioxygenase (173 aa).

The tract at residues 1 to 21 (MKFYYHDNDSSVDQCAPHDSG) is disordered. Fe(2+) contacts are provided by H84, H86, E90, and H129. Residues H84, H86, E90, and H129 each contribute to the Ni(2+) site.

This sequence belongs to the acireductone dioxygenase (ARD) family. Requires Fe(2+) as cofactor. Ni(2+) serves as cofactor.

Its subcellular location is the cytoplasm. It is found in the nucleus. It catalyses the reaction 1,2-dihydroxy-5-(methylsulfanyl)pent-1-en-3-one + O2 = 4-methylsulfanyl-2-oxobutanoate + formate + 2 H(+). The enzyme catalyses 1,2-dihydroxy-5-(methylsulfanyl)pent-1-en-3-one + O2 = 3-(methylsulfanyl)propanoate + CO + formate + 2 H(+). It functions in the pathway amino-acid biosynthesis; L-methionine biosynthesis via salvage pathway; L-methionine from S-methyl-5-thio-alpha-D-ribose 1-phosphate: step 5/6. Its function is as follows. Catalyzes 2 different reactions between oxygen and the acireductone 1,2-dihydroxy-3-keto-5-methylthiopentene (DHK-MTPene) depending upon the metal bound in the active site. Fe-containing acireductone dioxygenase (Fe-ARD) produces formate and 2-keto-4-methylthiobutyrate (KMTB), the alpha-ketoacid precursor of methionine in the methionine recycle pathway. Ni-containing acireductone dioxygenase (Ni-ARD) produces methylthiopropionate, carbon monoxide and formate, and does not lie on the methionine recycle pathway. This is Acireductone dioxygenase from Yarrowia lipolytica (strain CLIB 122 / E 150) (Yeast).